Reading from the N-terminus, the 343-residue chain is MGSERIMTTQQQFLDLLSDIEPSTTTVNDCSSAHNTLRDALKVHNEFSKVHVHTFLSGSYKRNTAVRPTTIGGITQRPDVDIIALTNHTINDDPQIVLDAVHTALKDIGYTDLTVNRRSVNVKLKKVDMDVVPIISDGYGGYLIPDIHLEEWLVTNPPAHTEWTVEVNKNANGRFKPLVKLFKWWRRENLSDLKRPKGFILECLVAKHMNYYESNYEKLFVYLLETIRDSYGIYASLGIIPHLEDPGVAGNNVFSAVTADEFKTFFEKVEEQAAIARNALNETDDDKALALWRQVLGNRFPRSASHKSANSADMASSLIRSALGAGLTFPSTPVYPNKPGGFA.

This sequence belongs to the CD-NTase family. D01 subfamily. Mg(2+) is required as a cofactor.

The catalysed reaction is 3 ATP = 2',3',3'-c-tri-AMP + 3 diphosphate. In terms of biological role, cyclic nucleotide synthase (second messenger synthase) of a CBASS antivirus system. CBASS (cyclic oligonucleotide-based antiphage signaling system) provides immunity against bacteriophage. The CD-NTase protein synthesizes cyclic nucleotides in response to infection; these serve as specific second messenger signals. The signals activate a diverse range of effectors, leading to bacterial cell death and thus abortive phage infection. A type II-C(AAAA) CBASS system. Cyclic trinucleotide synthase that catalyzes the synthesis of 2',3',3'-cyclic AMP-AMP-AMP (2',3',3'-c-tri-AMP or 2'3'3'-cAAA) as the major product, as well as another cyclic AMP(4) 2'-5'-linked minor product that acts as a second messenger for cell signal transduction. This is Cyclic AMP-AMP-AMP synthase from Acinetobacter sp. (strain ATCC 27244 / 9458).